The sequence spans 351 residues: Trace amine-associated receptor 2 (351 aa).

The Extracellular portion of the chain corresponds to 1 to 48 (MAVSSEQHELSHFKRTQTKKEKFNCSEYGNRSCPENERSLGVRVAMYS). N-linked (GlcNAc...) asparagine glycans are attached at residues asparagine 24 and asparagine 30. Intrachain disulfides connect cysteine 33-cysteine 197 and cysteine 116-cysteine 201. A helical membrane pass occupies residues 49 to 69 (FMAGSIFITIFGNLAMIISIS). Residues 70–79 (YFKQLHTPTN) are Cytoplasmic-facing. The helical transmembrane segment at 80-100 (FLILSMAITDFLLGFTIMPYS) threads the bilayer. The Extracellular segment spans residues 101–118 (MIRSVENCWYFGLTFCKI). The helical transmembrane segment at 119 to 139 (YYSFDLMLSITSIFHLCSVAI) threads the bilayer. Over 140-162 (DRFYAICYPLLYSTKITIPVIKR) the chain is Cytoplasmic. The helical transmembrane segment at 163–183 (LLLLCWSVPGAFAFGVVFSEA) threads the bilayer. The Extracellular segment spans residues 184–207 (YADGIEGYDILVACSSSCPVMFNK). Residues 208–228 (LWGTTLFMAGFFTPGSMMVGI) traverse the membrane as a helical segment. At 229-263 (YGKIFAVSRKHAHAINNLRENQNNQVKKDKKAAKT) the chain is on the cytoplasmic side. Residues 264–284 (LGIVIGVFLLCWFPCFFTILL) traverse the membrane as a helical segment. Over 285-299 (DPFLNFSTPVVLFDA) the chain is Extracellular. Asparagine 289 carries an N-linked (GlcNAc...) asparagine glycan. Residues 300–322 (LTWFGYFNSTCNPLIYGFFYPWF) traverse the membrane as a helical segment. The Cytoplasmic segment spans residues 323–351 (RRALKYILLGKIFSSCFHNTILCMQKESE).

The protein belongs to the G-protein coupled receptor 1 family. In terms of tissue distribution, not expressed in the pons, thalamus, hypothalamus, hippocampus, caudate, putamen, frontal cortex, basal forebrain, midbrain or liver.

The protein resides in the cell membrane. Functionally, orphan olfactory receptor specific for trace amines. Trace amine compounds are enriched in animal body fluids and act on trace amine-associated receptors (TAARs) to elicit both intraspecific and interspecific innate behaviors. Ligand-binding causes a conformation change that triggers signaling via the G(s)-class of G-proteins which activate adenylate cyclase. The polypeptide is Trace amine-associated receptor 2 (Homo sapiens (Human)).